Here is a 408-residue protein sequence, read N- to C-terminus: 3-hydroxy-3-methylglutaryl-coenzyme A reductase (408 aa).

Catalysis depends on charge relay system residues Glu-101 and Asp-307. His-403 functions as the Proton donor in the catalytic mechanism.

The protein belongs to the HMG-CoA reductase family.

It carries out the reaction (R)-mevalonate + 2 NADP(+) + CoA = (3S)-3-hydroxy-3-methylglutaryl-CoA + 2 NADPH + 2 H(+). It participates in metabolic intermediate biosynthesis; (R)-mevalonate biosynthesis; (R)-mevalonate from acetyl-CoA: step 3/3. Converts HMG-CoA to mevalonate. This Pyrococcus abyssi (strain GE5 / Orsay) protein is 3-hydroxy-3-methylglutaryl-coenzyme A reductase (hmgA).